The following is a 217-amino-acid chain: MSTESKLREEICRIGASLYQRGYTVGSAGNISARLDDGWLITPTDACLGMMDPAAVAKVATDGSWVSGDKPSKTLMLHRAIYDNNREAHAVVHTHSTHLVALTLAGVWQPDDVLPPLTPYYVMKVGHIPLIPYHRPGDPAVAARVATLAAQVRGVLLERLGPVVWESSVSRAAFALEELEETAKLWMTMKDTPGFAARAALPDGALTELRDAFQARW.

Zn(2+) contacts are provided by histidine 93 and histidine 95. The active-site Proton donor is tyrosine 120.

This sequence belongs to the aldolase class II family. AraD/FucA subfamily. The cofactor is Zn(2+).

The catalysed reaction is 3-dehydro-4-O-phospho-D-erythronate + H(+) = dihydroxyacetone phosphate + CO2. It catalyses the reaction 3-dehydro-4-O-phospho-L-erythronate + H(+) = dihydroxyacetone phosphate + CO2. Functionally, catalyzes the decarboxylation of 3-oxo-tetronate 4-phosphate to dihydroxyacetone phosphate (DHAP) and CO(2). This is 3-oxo-tetronate 4-phosphate decarboxylase from Cupriavidus necator (strain ATCC 17699 / DSM 428 / KCTC 22496 / NCIMB 10442 / H16 / Stanier 337) (Ralstonia eutropha).